Consider the following 309-residue polypeptide: Minor serine/threonine-protein phosphatase PP2A-1 catalytic subunit (309 aa).

D57, H59, D85, and N117 together coordinate Mn(2+). H118 (proton donor) is an active-site residue. Positions 167 and 241 each coordinate Mn(2+). L309 carries the post-translational modification Leucine methyl ester.

It belongs to the PPP phosphatase family. PP-2A subfamily. Mn(2+) serves as cofactor.

It catalyses the reaction O-phospho-L-seryl-[protein] + H2O = L-seryl-[protein] + phosphate. The catalysed reaction is O-phospho-L-threonyl-[protein] + H2O = L-threonyl-[protein] + phosphate. Its function is as follows. Essential role in cell cycle control. PP2A may be involved in controlling the entry into mitosis, possibly acting as an inhibitor. This is Minor serine/threonine-protein phosphatase PP2A-1 catalytic subunit (ppa1) from Schizosaccharomyces pombe (strain 972 / ATCC 24843) (Fission yeast).